Consider the following 373-residue polypeptide: Chaperone protein DnaJ (373 aa).

A J domain is found at S4–G69. Residues G135–K212 form a CR-type zinc finger. 8 residues coordinate Zn(2+): C148, C151, C164, C167, C186, C189, C200, and C203. 4 CXXCXGXG motif repeats span residues C148–G155, C164–G171, C186–G193, and C200–G207.

It belongs to the DnaJ family. In terms of assembly, homodimer. It depends on Zn(2+) as a cofactor.

It is found in the cytoplasm. Its function is as follows. Participates actively in the response to hyperosmotic and heat shock by preventing the aggregation of stress-denatured proteins and by disaggregating proteins, also in an autonomous, DnaK-independent fashion. Unfolded proteins bind initially to DnaJ; upon interaction with the DnaJ-bound protein, DnaK hydrolyzes its bound ATP, resulting in the formation of a stable complex. GrpE releases ADP from DnaK; ATP binding to DnaK triggers the release of the substrate protein, thus completing the reaction cycle. Several rounds of ATP-dependent interactions between DnaJ, DnaK and GrpE are required for fully efficient folding. Also involved, together with DnaK and GrpE, in the DNA replication of plasmids through activation of initiation proteins. This is Chaperone protein DnaJ from Campylobacter jejuni subsp. jejuni serotype O:2 (strain ATCC 700819 / NCTC 11168).